Here is a 318-residue protein sequence, read N- to C-terminus: Fibronectin type III domain-containing protein 11 (318 aa).

Positions 210–307 (VVFDRKASAA…DSLTLHTKPE (98 aa)) constitute a Fibronectin type-III domain.

This chain is Fibronectin type III domain-containing protein 11 (FNDC11), found in Homo sapiens (Human).